We begin with the raw amino-acid sequence, 453 residues long: Carbamoyl phosphate synthase arginine-specific small chain (453 aa).

The N-terminal 28 residues, 1–28, are a transit peptide targeting the mitochondrion; sequence MFARVFKAMPARASALTSVNASIPARFM. The Glutamine amidotransferase type-1 domain occupies 219–406; that stretch reads HVAVIDCGVK…IDSVKKYKAS (188 aa). The Nucleophile role is filled by C295. Residues H379 and E381 contribute to the active site.

This sequence belongs to the CarA family. In terms of assembly, heterodimer composed of 2 chains; the small (or glutamine) chain promotes the hydrolysis of glutamine to ammonia, which is used by the large (or ammonia) chain to synthesize carbamoyl phosphate.

The protein localises to the mitochondrion matrix. It catalyses the reaction hydrogencarbonate + L-glutamine + 2 ATP + H2O = carbamoyl phosphate + L-glutamate + 2 ADP + phosphate + 2 H(+). The catalysed reaction is L-glutamine + H2O = L-glutamate + NH4(+). The protein operates within amino-acid biosynthesis; L-arginine biosynthesis; carbamoyl phosphate from bicarbonate: step 1/1. Its function is as follows. Small subunit of the arginine-specific carbamoyl phosphate synthase (CPSase). CPSase catalyzes the formation of carbamoyl phosphate from the ammonia moiety of glutamine, carbonate, and phosphate donated by ATP, the first step of the arginine biosynthetic pathway. The small subunit (glutamine amidotransferase) binds and cleaves glutamine to supply the large subunit with the substrate ammonia. In Aspergillus fumigatus (strain ATCC MYA-4609 / CBS 101355 / FGSC A1100 / Af293) (Neosartorya fumigata), this protein is Carbamoyl phosphate synthase arginine-specific small chain (cpa1).